The sequence spans 661 residues: UvrABC system protein B (661 aa).

The region spanning A25 to R182 is the Helicase ATP-binding domain. G38–T45 is a binding site for ATP. The short motif at Y91–I114 is the Beta-hairpin element. A Helicase C-terminal domain is found at Q430–I592. One can recognise a UVR domain in the interval K621–A656.

Belongs to the UvrB family. As to quaternary structure, forms a heterotetramer with UvrA during the search for lesions. Interacts with UvrC in an incision complex.

The protein resides in the cytoplasm. Its function is as follows. The UvrABC repair system catalyzes the recognition and processing of DNA lesions. A damage recognition complex composed of 2 UvrA and 2 UvrB subunits scans DNA for abnormalities. Upon binding of the UvrA(2)B(2) complex to a putative damaged site, the DNA wraps around one UvrB monomer. DNA wrap is dependent on ATP binding by UvrB and probably causes local melting of the DNA helix, facilitating insertion of UvrB beta-hairpin between the DNA strands. Then UvrB probes one DNA strand for the presence of a lesion. If a lesion is found the UvrA subunits dissociate and the UvrB-DNA preincision complex is formed. This complex is subsequently bound by UvrC and the second UvrB is released. If no lesion is found, the DNA wraps around the other UvrB subunit that will check the other stand for damage. The sequence is that of UvrABC system protein B from Rickettsia akari (strain Hartford).